A 247-amino-acid chain; its full sequence is Phosphoribosylaminoimidazole-succinocarboxamide synthase (247 aa).

It belongs to the SAICAR synthetase family.

It catalyses the reaction 5-amino-1-(5-phospho-D-ribosyl)imidazole-4-carboxylate + L-aspartate + ATP = (2S)-2-[5-amino-1-(5-phospho-beta-D-ribosyl)imidazole-4-carboxamido]succinate + ADP + phosphate + 2 H(+). The protein operates within purine metabolism; IMP biosynthesis via de novo pathway; 5-amino-1-(5-phospho-D-ribosyl)imidazole-4-carboxamide from 5-amino-1-(5-phospho-D-ribosyl)imidazole-4-carboxylate: step 1/2. The polypeptide is Phosphoribosylaminoimidazole-succinocarboxamide synthase (Synechococcus sp. (strain JA-2-3B'a(2-13)) (Cyanobacteria bacterium Yellowstone B-Prime)).